The following is a 336-amino-acid chain: Glycerol-3-phosphate dehydrogenase [NAD(P)+] (336 aa).

Residues serine 11, tryptophan 12, arginine 32, and lysine 109 each coordinate NADPH. Sn-glycerol 3-phosphate-binding residues include lysine 109, glycine 140, and serine 142. An NADPH-binding site is contributed by alanine 144. Sn-glycerol 3-phosphate is bound by residues lysine 195, aspartate 248, serine 258, arginine 259, and asparagine 260. The active-site Proton acceptor is lysine 195. Residue arginine 259 coordinates NADPH. Positions 283 and 285 each coordinate NADPH.

This sequence belongs to the NAD-dependent glycerol-3-phosphate dehydrogenase family.

It localises to the cytoplasm. The catalysed reaction is sn-glycerol 3-phosphate + NAD(+) = dihydroxyacetone phosphate + NADH + H(+). The enzyme catalyses sn-glycerol 3-phosphate + NADP(+) = dihydroxyacetone phosphate + NADPH + H(+). The protein operates within membrane lipid metabolism; glycerophospholipid metabolism. Catalyzes the reduction of the glycolytic intermediate dihydroxyacetone phosphate (DHAP) to sn-glycerol 3-phosphate (G3P), the key precursor for phospholipid synthesis. In Leuconostoc mesenteroides subsp. mesenteroides (strain ATCC 8293 / DSM 20343 / BCRC 11652 / CCM 1803 / JCM 6124 / NCDO 523 / NBRC 100496 / NCIMB 8023 / NCTC 12954 / NRRL B-1118 / 37Y), this protein is Glycerol-3-phosphate dehydrogenase [NAD(P)+].